An 827-amino-acid chain; its full sequence is MSDEKKKGSAASAMPTAMAPPGLINKEDIPQVLPILPLRNSVFFPGGVLPLAVGRQKTIALIKDAVRDDQVIGVVTQRRAEEEDPGAADLYTMGTVARIVKLLKMGEDNYSLVVQGLARFRVVELVQEAPYLKARVDAVEDKTSSENVEVEALGINLKKLAREVIELMPELPAAATELVESITHPGHLADLIAANVDVPIEEKQAVLETVDLKARMKLVLELLNRKREILKLSNKIDSAVKGEMSKTQREYYLRQQLKAIKEELGEMGEEEEELDELQERLKKAGLPPDVEKVANKELNRLKTIPAASSEYTVARTYLDWIADLPWAKISEDNLDIENARQQLDKDHFGIKKVKKRILEYLAVRKLKNDMRGPILCLVGPPGVGKTSLGQSVAKATGRKFVRLSLGGVRDEAEIRGHRRTYVGALPGRFIQSMKKAGTKNPVMMLDEIDKLGADFRGDPSAALLEVLDPEQNNTFSDHYLDVPFDLSKVMFVATANQLDPIPGPLRDRMEIIELTGYTFEEKQSIARIHLVPKQLKEHGLSPDHIDITDEALLTLTTAYTREAGVRNLERRIADICRAVAVEVAGGKTEKQTINADRVKEILGPEMFYSEVAERTEVPGVATGLAWTAAGGDLLFIEATKMAGKGGMTLTGQLGDVMKESATAALSYLRSKAEQLGISPNFLEKTDLHLHFPAGSIPKDGPSAGVTILTALTSLLTGIRVRHDTAMTGEATLRGLVLPVGGIKEKVLAAHRAGIKRVILPERCRKDLIDVPDQARNELEFIFVTHMDDVLKAALETPPVGVAGTPGGEPGKEAPLPKPAESAPEVRA.

Residues 1-22 (MSDEKKKGSAASAMPTAMAPPG) form a disordered region. Positions 9–21 (SAASAMPTAMAPP) are enriched in low complexity. The Lon N-terminal domain maps to 33–227 (LPILPLRNSV…LVLELLNRKR (195 aa)). 379–386 (GPPGVGKT) lines the ATP pocket. The Lon proteolytic domain occupies 615 to 796 (TEVPGVATGL…DDVLKAALET (182 aa)). Residues S702 and K745 contribute to the active site. The disordered stretch occupies residues 799–827 (VGVAGTPGGEPGKEAPLPKPAESAPEVRA).

Belongs to the peptidase S16 family. As to quaternary structure, homohexamer. Organized in a ring with a central cavity.

The protein resides in the cytoplasm. It carries out the reaction Hydrolysis of proteins in presence of ATP.. Its function is as follows. ATP-dependent serine protease that mediates the selective degradation of mutant and abnormal proteins as well as certain short-lived regulatory proteins. Required for cellular homeostasis and for survival from DNA damage and developmental changes induced by stress. Degrades polypeptides processively to yield small peptide fragments that are 5 to 10 amino acids long. Binds to DNA in a double-stranded, site-specific manner. This Myxococcus xanthus protein is Lon protease 2.